A 79-amino-acid chain; its full sequence is Small ribosomal subunit protein bS18 (79 aa).

Belongs to the bacterial ribosomal protein bS18 family. As to quaternary structure, part of the 30S ribosomal subunit. Forms a tight heterodimer with protein bS6.

In terms of biological role, binds as a heterodimer with protein bS6 to the central domain of the 16S rRNA, where it helps stabilize the platform of the 30S subunit. The protein is Small ribosomal subunit protein bS18 of Ureaplasma parvum serovar 3 (strain ATCC 27815 / 27 / NCTC 11736).